A 264-amino-acid chain; its full sequence is Adenosylcobinamide-GDP ribazoletransferase (264 aa).

Helical transmembrane passes span 39-59, 63-83, 121-141, 148-168, 201-221, and 241-261; these read IAYAVPLAGAAIGLAGAAILI, ALGLPNLVAAILAVLTCVLLT, ACALVFSLLLRVALLDGLLAL, LALIAAASLSRAAGMLLLEFL, LLIVPSTGVGATLMAIGLSVL, and VAGAVQQLCEIAFLMGVLIYA.

This sequence belongs to the CobS family. It depends on Mg(2+) as a cofactor.

The protein resides in the cell inner membrane. The catalysed reaction is alpha-ribazole + adenosylcob(III)inamide-GDP = adenosylcob(III)alamin + GMP + H(+). It carries out the reaction alpha-ribazole 5'-phosphate + adenosylcob(III)inamide-GDP = adenosylcob(III)alamin 5'-phosphate + GMP + H(+). It participates in cofactor biosynthesis; adenosylcobalamin biosynthesis; adenosylcobalamin from cob(II)yrinate a,c-diamide: step 7/7. Its function is as follows. Joins adenosylcobinamide-GDP and alpha-ribazole to generate adenosylcobalamin (Ado-cobalamin). Also synthesizes adenosylcobalamin 5'-phosphate from adenosylcobinamide-GDP and alpha-ribazole 5'-phosphate. This chain is Adenosylcobinamide-GDP ribazoletransferase, found in Azorhizobium caulinodans (strain ATCC 43989 / DSM 5975 / JCM 20966 / LMG 6465 / NBRC 14845 / NCIMB 13405 / ORS 571).